A 410-amino-acid chain; its full sequence is Sporulation killing factor maturation protein SkfB (410 aa).

Residues 103 to 314 enclose the Radical SAM core domain; sequence SYLPISCTLQ…LREARHKWGD (212 aa). Cys117, Cys121, Cys124, Cys380, Cys385, and Cys387 together coordinate [4Fe-4S] cluster.

Belongs to the radical SAM superfamily. Requires [4Fe-4S] cluster as cofactor.

Its subcellular location is the cytoplasm. In terms of biological role, catalyzes the formation of the thioether bond required for production of the sporulation killing factor (SKF) from SkfA. Forms the cysteine-methionine thioether bond found in SKF; the acceptor amino acid can be hydrophobic, aromatic or a small hydrophilic amino acid but not a larger hydrophilic amino acid, i.e. Met=Ala, Phe, Leu, Tyr&gt;Asn, Ser&gt;&gt;Gln, Glu, Lys. The relative position of Cys and Met in the substrate cannot be inverted, in vitro the thioether bond cannot be made in the absence of the SkfA propeptide, suggesting this is the first reaction in SKF maturation. In vitro, in the absence of a second substrate, cleaves S-adenosyl-L-methionine into Met and 5'-dA. The chain is Sporulation killing factor maturation protein SkfB from Bacillus subtilis (strain 168).